Consider the following 391-residue polypeptide: Pepsin B (391 aa).

A signal peptide spans 1 to 16 (MKCLILALICLQLSEG). Positions 17–60 (LVVRQILHKGKSIRERMEENGVLEDFLRYNKKADPAAKFLFNKD) are cleaved as a propeptide — activation peptide. The region spanning 75 to 388 (YFGEISIGTP…DMANNRVGFA (314 aa)) is the Peptidase A1 domain. D93 is a catalytic residue. Intrachain disulfides connect C106–C111 and C270–C274. D279 is an active-site residue. C313 and C346 form a disulfide bridge.

The protein belongs to the peptidase A1 family.

It is found in the secreted. The catalysed reaction is Degradation of gelatin, little activity on hemoglobin. Specificity on B chain of insulin more restricted than that of pepsin A. Does not cleave 1-Phe-|-Val-2, 4-Gln-|-His-5 or 23-Gly-|-Phe-24.. Hydrolyzes various peptides including beta-endorphin, insulin B chain, dynorphin A, and neurokinin A, with high specificity for the cleavage of the Phe-Xaa bonds. In Monodelphis domestica (Gray short-tailed opossum), this protein is Pepsin B.